A 37-amino-acid chain; its full sequence is FRGRDAAAKASGLVGLTDRRGCCSHPACNVDHPEICG.

Residues 1-20 constitute a propeptide that is removed on maturation; it reads FRGRDAAAKASGLVGLTDRR. Disulfide bonds link Cys-22–Cys-28 and Cys-23–Cys-36. Residues 24-26 form a ser-Xaa-Pro motif, crucial for potent interaction with nAChR region; that stretch reads SHP. Cys-36 bears the Cysteine amide mark.

It belongs to the conotoxin A superfamily. In terms of tissue distribution, expressed by the venom duct.

Its subcellular location is the secreted. Alpha-conotoxins act on postsynaptic membranes, they bind to the nicotinic acetylcholine receptors (nAChR) and thus inhibit them. This toxin blocks alpha-3-beta-2/CHRNA3-CHRNB2 nAChR with high selectivity (IC(50)=8.67 nM (on rat) and 17.5 (on human)). Also has weaker activity on alpha-6/alpha-3-beta-2-beta-3 (CHRNA6/CHRNA3-CHRNB2-CHRNB3) (IC(50)=108 nM (on rat)), alpha-6/alpha-3-beta-4 (CHRNA6/CHRNA3-CHRNB4) (IC(50)=121 nM (on rat)), alpha-3-beta-4 (CHRNA3-CHRNB4) (IC(50)=148 nM (on rat)), and alpha-7/CHRNA7 nAChRs (IC(50)=3000 nM (on rat)). When tested on mouse with hot-plate tests, this toxin significantly increases the base pain threshold and shows analgesic effects. This Conus lividus (Livid cone) protein is Alpha-conotoxin LvIA.